The primary structure comprises 135 residues: Large ribosomal subunit protein uL16 (135 aa).

It belongs to the universal ribosomal protein uL16 family. In terms of assembly, part of the 50S ribosomal subunit.

Functionally, binds 23S rRNA and is also seen to make contacts with the A and possibly P site tRNAs. This chain is Large ribosomal subunit protein uL16, found in Coprothermobacter proteolyticus (strain ATCC 35245 / DSM 5265 / OCM 4 / BT).